The chain runs to 665 residues: Transketolase (665 aa).

H26 contacts substrate. Residues H66 and 114 to 116 each bind thiamine diphosphate; that span reads GPL. D155 is a binding site for Mg(2+). G156 and N185 together coordinate thiamine diphosphate. Mg(2+) contacts are provided by N185 and I187. 3 residues coordinate substrate: H261, R358, and S385. H261 provides a ligand contact to thiamine diphosphate. The active-site Proton donor is the E411. F437 contributes to the thiamine diphosphate binding site. Positions 461, 469, and 520 each coordinate substrate.

It belongs to the transketolase family. In terms of assembly, homodimer. The cofactor is Mg(2+). It depends on Ca(2+) as a cofactor. Mn(2+) is required as a cofactor. Co(2+) serves as cofactor. Requires thiamine diphosphate as cofactor.

The enzyme catalyses D-sedoheptulose 7-phosphate + D-glyceraldehyde 3-phosphate = aldehydo-D-ribose 5-phosphate + D-xylulose 5-phosphate. In terms of biological role, catalyzes the transfer of a two-carbon ketol group from a ketose donor to an aldose acceptor, via a covalent intermediate with the cofactor thiamine pyrophosphate. This Buchnera aphidicola subsp. Schizaphis graminum (strain Sg) protein is Transketolase (tkt).